The chain runs to 186 residues: Dihydrofolate reductase (186 aa).

In terms of domain architecture, DHFR spans 3–184 (PLNCIVAVSQ…IKYKFEVYEK (182 aa)). Residues Ala9 and 15-21 (GIGKNGD) contribute to the NADP(+) site. 30–35 (EYKYFQ) contributes to the substrate binding site. N6-acetyllysine; alternate is present on Lys32. Lys32 bears the N6-succinyllysine; alternate mark. An NADP(+)-binding site is contributed by 54–56 (RKT). Arg70 contacts substrate. NADP(+) is bound by residues 76-78 (SRE) and 116-123 (GGSSVYKE). Cysteine derivative; partial is present on Cys162.

The protein belongs to the dihydrofolate reductase family. In terms of assembly, homodimer.

It is found in the mitochondrion. The protein resides in the cytoplasm. It catalyses the reaction (6S)-5,6,7,8-tetrahydrofolate + NADP(+) = 7,8-dihydrofolate + NADPH + H(+). Its pathway is cofactor biosynthesis; tetrahydrofolate biosynthesis; 5,6,7,8-tetrahydrofolate from 7,8-dihydrofolate: step 1/1. Key enzyme in folate metabolism. Contributes to the de novo mitochondrial thymidylate biosynthesis pathway. Catalyzes an essential reaction for de novo glycine and purine synthesis, and for DNA precursor synthesis. Binds its own mRNA and that of DHFR2. The polypeptide is Dihydrofolate reductase (DHFR) (Sus scrofa (Pig)).